Here is a 175-residue protein sequence, read N- to C-terminus: Translation initiation factor IF-3 (175 aa).

The protein belongs to the IF-3 family. In terms of assembly, monomer.

It localises to the cytoplasm. IF-3 binds to the 30S ribosomal subunit and shifts the equilibrium between 70S ribosomes and their 50S and 30S subunits in favor of the free subunits, thus enhancing the availability of 30S subunits on which protein synthesis initiation begins. The polypeptide is Translation initiation factor IF-3 (Blochmanniella floridana).